A 173-amino-acid polypeptide reads, in one-letter code: Globin-like host-protective antigen (173 aa).

Residues 1 to 15 (MRFLLLAAFVAYAYA) form the signal peptide. Residues 25–166 (ALSALDVVPL…FNDEAQKQLA (142 aa)) form the Globin domain. His-114 contributes to the heme b binding site.

The protein belongs to the globin family.

The protein resides in the secreted. It localises to the extracellular space. In terms of biological role, may be a globin and may play a role in oxygen transport. The chain is Globin-like host-protective antigen from Trichostrongylus colubriformis (Black scour worm).